The following is a 406-amino-acid chain: Exodeoxyribonuclease 7 large subunit (406 aa).

The protein belongs to the XseA family. In terms of assembly, heterooligomer composed of large and small subunits.

The protein localises to the cytoplasm. The catalysed reaction is Exonucleolytic cleavage in either 5'- to 3'- or 3'- to 5'-direction to yield nucleoside 5'-phosphates.. Its function is as follows. Bidirectionally degrades single-stranded DNA into large acid-insoluble oligonucleotides, which are then degraded further into small acid-soluble oligonucleotides. The sequence is that of Exodeoxyribonuclease 7 large subunit from Thermobifida fusca (strain YX).